We begin with the raw amino-acid sequence, 931 residues long: Probable ubiquitin-like-specific protease 2B (931 aa).

The tract at residues 204–224 (SLSDRSALSEASDSEDDEEDW) is disordered. Over residues 215-224 (SDSEDDEEDW) the composition is skewed to acidic residues. Active-site residues include H489, D522, and C577. The segment at 825–931 (HEEEIDESPP…PTGEAEEMEK (107 aa)) is disordered. The segment covering 839–851 (SLKSATVGSNTAD) has biased composition (polar residues). Positions 873-904 (NDRDEEKPLEHDLEIGDKTSEDVGDDCDQKEP) are enriched in basic and acidic residues.

It belongs to the peptidase C48 family.

Functionally, protease that catalyzes two essential functions in the SUMO pathway: processing of full-length SUMOs to their mature forms and deconjugation of SUMO from targeted proteins. The polypeptide is Probable ubiquitin-like-specific protease 2B (ULP2B) (Arabidopsis thaliana (Mouse-ear cress)).